Here is a 232-residue protein sequence, read N- to C-terminus: Peptidyl-prolyl cis-trans isomerase FKBP18, chloroplastic (232 aa).

The region spanning 108–226 is the PPIase FKBP-type domain; sequence GSTAQVHFDC…ELNIELLRVT (119 aa).

This sequence belongs to the FKBP-type PPIase family.

Its subcellular location is the plastid. The protein resides in the chloroplast thylakoid lumen. It carries out the reaction [protein]-peptidylproline (omega=180) = [protein]-peptidylproline (omega=0). In terms of biological role, PPIases accelerate the folding of proteins. It catalyzes the cis-trans isomerization of proline imidic peptide bonds in oligopeptides. This Arabidopsis thaliana (Mouse-ear cress) protein is Peptidyl-prolyl cis-trans isomerase FKBP18, chloroplastic (FKBP18).